We begin with the raw amino-acid sequence, 370 residues long: tRNA-specific 2-thiouridylase MnmA (370 aa).

ATP is bound by residues 11 to 18 and Met-37; that span reads GMSGGVDS. The interval 97 to 99 is interaction with target base in tRNA; sequence NPD. Cys-102 acts as the Nucleophile in catalysis. Cys-102 and Cys-199 form a disulfide bridge. Residue Gly-126 coordinates ATP. Residues 149-151 form an interaction with tRNA region; it reads KDQ. Residue Cys-199 is the Cysteine persulfide intermediate of the active site. Positions 307–308 are interaction with tRNA; that stretch reads RY.

Belongs to the MnmA/TRMU family.

The protein resides in the cytoplasm. The enzyme catalyses S-sulfanyl-L-cysteinyl-[protein] + uridine(34) in tRNA + AH2 + ATP = 2-thiouridine(34) in tRNA + L-cysteinyl-[protein] + A + AMP + diphosphate + H(+). In terms of biological role, catalyzes the 2-thiolation of uridine at the wobble position (U34) of tRNA, leading to the formation of s(2)U34. In Staphylococcus saprophyticus subsp. saprophyticus (strain ATCC 15305 / DSM 20229 / NCIMB 8711 / NCTC 7292 / S-41), this protein is tRNA-specific 2-thiouridylase MnmA.